The chain runs to 177 residues: MIKMELKEAKYLGGIGAVLNLVSYAVGGILAIAGYVLILLALNKISKIFNDDEVFKKYLYGVVLWIIAVLIVIFAVGISFVSLSFIPLDYGLTAMSSFLVGVILFYILSVIGGYFIKKSYEKVSYYTGVDSFRICGLLYFIGTLLLIVIVGIIVIIVAQILEIVAYFSLPDDLKSEN.

Transmembrane regions (helical) follow at residues 20 to 42 (NLVSYAVGGILAIAGYVLILLAL), 62 to 84 (VVLWIIAVLIVIFAVGISFVSLS), 94 to 116 (AMSSFLVGVILFYILSVIGGYFI), and 136 to 158 (GLLYFIGTLLLIVIVGIIVIIVA).

It localises to the cell membrane. This is an uncharacterized protein from Methanocaldococcus jannaschii (strain ATCC 43067 / DSM 2661 / JAL-1 / JCM 10045 / NBRC 100440) (Methanococcus jannaschii).